A 486-amino-acid chain; its full sequence is Differentially expressed in FDCP 8 homolog (486 aa).

The disordered stretch occupies residues 1-26 (MSSWCSSEDAHNQSSTPSTRSRKSSW). 2 Phorbol-ester/DAG-type zinc fingers span residues 160-212 (GHEF…KRVC) and 393-459 (IHTV…SLNC).

This sequence belongs to the DEF8 family.

This chain is Differentially expressed in FDCP 8 homolog, found in Caenorhabditis elegans.